Reading from the N-terminus, the 482-residue chain is ATP synthase subunit beta, chloroplastic (482 aa).

Position 162–169 (162–169) interacts with ATP; sequence GGAGVGKT.

The protein belongs to the ATPase alpha/beta chains family. In terms of assembly, F-type ATPases have 2 components, CF(1) - the catalytic core - and CF(0) - the membrane proton channel. CF(1) has five subunits: alpha(3), beta(3), gamma(1), delta(1), epsilon(1). CF(0) has four main subunits: a(1), b(1), b'(1) and c(9-12).

Its subcellular location is the plastid. It localises to the chloroplast thylakoid membrane. It catalyses the reaction ATP + H2O + 4 H(+)(in) = ADP + phosphate + 5 H(+)(out). Its function is as follows. Produces ATP from ADP in the presence of a proton gradient across the membrane. The catalytic sites are hosted primarily by the beta subunits. The chain is ATP synthase subunit beta, chloroplastic from Pleurastrum terricola (Filamentous green alga).